Consider the following 350-residue polypeptide: Ornithine cyclodeaminase (350 aa).

The L-ornithine site is built by R45 and K69. Residues T84, R112, 139–140, D161, T202, 225–228, K232, and S293 contribute to the NAD(+) site; these read AQ and VGGD. Residue R112 coordinates L-ornithine. D228 serves as a coordination point for L-ornithine. D228 acts as the Proton donor/acceptor in catalysis. V294 provides a ligand contact to L-ornithine. NAD(+) is bound at residue K331.

This sequence belongs to the ornithine cyclodeaminase/mu-crystallin family. Homodimer. NAD(+) serves as cofactor.

The enzyme catalyses L-ornithine = L-proline + NH4(+). Its pathway is amino-acid biosynthesis; L-proline biosynthesis; L-proline from L-ornithine: step 1/1. Its function is as follows. Catalyzes the conversion of L-ornithine into L-proline with release of ammonia. Is likely involved in the L-ornithine degradation pathway that allows P.putida to utilize this compound as sole carbon and nitrogen source. This chain is Ornithine cyclodeaminase, found in Pseudomonas putida (strain ATCC 47054 / DSM 6125 / CFBP 8728 / NCIMB 11950 / KT2440).